A 434-amino-acid chain; its full sequence is Gamma-glutamyl phosphate reductase (434 aa).

The protein belongs to the gamma-glutamyl phosphate reductase family.

The protein resides in the cytoplasm. It catalyses the reaction L-glutamate 5-semialdehyde + phosphate + NADP(+) = L-glutamyl 5-phosphate + NADPH + H(+). It functions in the pathway amino-acid biosynthesis; L-proline biosynthesis; L-glutamate 5-semialdehyde from L-glutamate: step 2/2. In terms of biological role, catalyzes the NADPH-dependent reduction of L-glutamate 5-phosphate into L-glutamate 5-semialdehyde and phosphate. The product spontaneously undergoes cyclization to form 1-pyrroline-5-carboxylate. In Trichormus variabilis (strain ATCC 29413 / PCC 7937) (Anabaena variabilis), this protein is Gamma-glutamyl phosphate reductase.